Reading from the N-terminus, the 439-residue chain is ATP-dependent protease ATPase subunit HslU (439 aa).

ATP is bound by residues Ile-17, 59-64, Asp-251, Glu-317, and Arg-389; that span reads GVGKTE.

It belongs to the ClpX chaperone family. HslU subfamily. In terms of assembly, a double ring-shaped homohexamer of HslV is capped on each side by a ring-shaped HslU homohexamer. The assembly of the HslU/HslV complex is dependent on binding of ATP.

The protein resides in the cytoplasm. Functionally, ATPase subunit of a proteasome-like degradation complex; this subunit has chaperone activity. The binding of ATP and its subsequent hydrolysis by HslU are essential for unfolding of protein substrates subsequently hydrolyzed by HslV. HslU recognizes the N-terminal part of its protein substrates and unfolds these before they are guided to HslV for hydrolysis. The sequence is that of ATP-dependent protease ATPase subunit HslU from Campylobacter jejuni (strain RM1221).